Consider the following 142-residue polypeptide: Large ribosomal subunit protein uL13 (142 aa).

This sequence belongs to the universal ribosomal protein uL13 family. In terms of assembly, part of the 50S ribosomal subunit.

In terms of biological role, this protein is one of the early assembly proteins of the 50S ribosomal subunit, although it is not seen to bind rRNA by itself. It is important during the early stages of 50S assembly. The chain is Large ribosomal subunit protein uL13 from Pseudomonas aeruginosa (strain LESB58).